The chain runs to 103 residues: Small ribosomal subunit protein uS10 (103 aa).

Belongs to the universal ribosomal protein uS10 family. Part of the 30S ribosomal subunit.

Functionally, involved in the binding of tRNA to the ribosomes. This is Small ribosomal subunit protein uS10 from Salinibacter ruber (strain DSM 13855 / M31).